Here is a 90-residue protein sequence, read N- to C-terminus: Cytochrome c7 (90 aa).

The signal sequence occupies residues 1–20 (MKRIIASLALSVFCAGLAFA). Residues His-37, His-40, Cys-47, Cys-50, His-51, His-67, Cys-70, Cys-73, His-74, Cys-84, Cys-87, and His-88 each contribute to the heme site.

Post-translationally, binds 3 heme groups per subunit.

In terms of biological role, may be involved in anaerobic iron respiration. The sequence is that of Cytochrome c7 from Geobacter metallireducens (strain ATCC 53774 / DSM 7210 / GS-15).